The following is a 418-amino-acid chain: UDP-N-acetylglucosamine 1-carboxyvinyltransferase (418 aa).

Residue 22–23 (KN) participates in phosphoenolpyruvate binding. Arg93 contributes to the UDP-N-acetyl-alpha-D-glucosamine binding site. Cys117 (proton donor) is an active-site residue. A 2-(S-cysteinyl)pyruvic acid O-phosphothioketal modification is found at Cys117. Asp305 and Val327 together coordinate UDP-N-acetyl-alpha-D-glucosamine.

The protein belongs to the EPSP synthase family. MurA subfamily.

It is found in the cytoplasm. It catalyses the reaction phosphoenolpyruvate + UDP-N-acetyl-alpha-D-glucosamine = UDP-N-acetyl-3-O-(1-carboxyvinyl)-alpha-D-glucosamine + phosphate. It functions in the pathway cell wall biogenesis; peptidoglycan biosynthesis. Functionally, cell wall formation. Adds enolpyruvyl to UDP-N-acetylglucosamine. In Halorhodospira halophila (strain DSM 244 / SL1) (Ectothiorhodospira halophila (strain DSM 244 / SL1)), this protein is UDP-N-acetylglucosamine 1-carboxyvinyltransferase.